The chain runs to 171 residues: UPF0763 protein HPP12_0677 (171 aa).

The protein belongs to the UPF0763 family.

The polypeptide is UPF0763 protein HPP12_0677 (Helicobacter pylori (strain P12)).